We begin with the raw amino-acid sequence, 239 residues long: 1-(5-phosphoribosyl)-5-[(5-phosphoribosylamino)methylideneamino] imidazole-4-carboxamide isomerase (239 aa).

Aspartate 8 serves as the catalytic Proton acceptor. The Proton donor role is filled by aspartate 129.

It belongs to the HisA/HisF family.

It localises to the cytoplasm. It catalyses the reaction 1-(5-phospho-beta-D-ribosyl)-5-[(5-phospho-beta-D-ribosylamino)methylideneamino]imidazole-4-carboxamide = 5-[(5-phospho-1-deoxy-D-ribulos-1-ylimino)methylamino]-1-(5-phospho-beta-D-ribosyl)imidazole-4-carboxamide. It functions in the pathway amino-acid biosynthesis; L-histidine biosynthesis; L-histidine from 5-phospho-alpha-D-ribose 1-diphosphate: step 4/9. This chain is 1-(5-phosphoribosyl)-5-[(5-phosphoribosylamino)methylideneamino] imidazole-4-carboxamide isomerase, found in Cereibacter sphaeroides (strain ATCC 17025 / ATH 2.4.3) (Rhodobacter sphaeroides).